The chain runs to 276 residues: Rhomboid protease GlpG (276 aa).

Helical transmembrane passes span 94 to 114 (GPVTWVMMIACVVVFIAMQIL), 142 to 162 (ALMHFSLMHILFNLLWWWYLG), 169 to 189 (LGSGKLIVITLISALLSGYVQ), 192 to 212 (FSGPWFGGLSGVVYALMGYVW), 229 to 249 (LIIFALIWIVAGWFDLFGMSM), and 250 to 270 (ANGAHIAGLAVGLAMAFVDSL). Catalysis depends on serine 201, which acts as the Nucleophile. Residue histidine 254 is part of the active site.

This sequence belongs to the peptidase S54 family.

Its subcellular location is the cell inner membrane. The catalysed reaction is Cleaves type-1 transmembrane domains using a catalytic dyad composed of serine and histidine that are contributed by different transmembrane domains.. Rhomboid-type serine protease that catalyzes intramembrane proteolysis. In Escherichia coli O81 (strain ED1a), this protein is Rhomboid protease GlpG.